The sequence spans 427 residues: Trigger factor (427 aa).

The 86-residue stretch at 163–248 (GDTVVIDFVG…IHEVKTKEVP (86 aa)) folds into the PPIase FKBP-type domain.

Belongs to the FKBP-type PPIase family. Tig subfamily.

The protein resides in the cytoplasm. The enzyme catalyses [protein]-peptidylproline (omega=180) = [protein]-peptidylproline (omega=0). Involved in protein export. Acts as a chaperone by maintaining the newly synthesized protein in an open conformation. Functions as a peptidyl-prolyl cis-trans isomerase. The sequence is that of Trigger factor from Streptococcus agalactiae serotype III (strain NEM316).